A 231-amino-acid polypeptide reads, in one-letter code: Probable septum site-determining protein MinC (231 aa).

Residues 102-125 are disordered; sequence KEKAPRPAPAPQAPAQNTTPVTKT.

It belongs to the MinC family. Interacts with MinD and FtsZ.

Functionally, cell division inhibitor that blocks the formation of polar Z ring septums. Rapidly oscillates between the poles of the cell to destabilize FtsZ filaments that have formed before they mature into polar Z rings. Prevents FtsZ polymerization. The polypeptide is Probable septum site-determining protein MinC (Escherichia coli O6:K15:H31 (strain 536 / UPEC)).